Consider the following 467-residue polypeptide: ATP synthase subunit beta (467 aa).

Residue 150–157 (GGAGVGKT) coordinates ATP.

It belongs to the ATPase alpha/beta chains family. As to quaternary structure, F-type ATPases have 2 components, CF(1) - the catalytic core - and CF(0) - the membrane proton channel. CF(1) has five subunits: alpha(3), beta(3), gamma(1), delta(1), epsilon(1). CF(0) has three main subunits: a(1), b(2) and c(9-12). The alpha and beta chains form an alternating ring which encloses part of the gamma chain. CF(1) is attached to CF(0) by a central stalk formed by the gamma and epsilon chains, while a peripheral stalk is formed by the delta and b chains.

It localises to the cell inner membrane. It carries out the reaction ATP + H2O + 4 H(+)(in) = ADP + phosphate + 5 H(+)(out). Its function is as follows. Produces ATP from ADP in the presence of a proton gradient across the membrane. The catalytic sites are hosted primarily by the beta subunits. This is ATP synthase subunit beta from Vibrio vulnificus (strain YJ016).